The following is a 330-amino-acid chain: tRNA pseudouridine synthase B (330 aa).

Asp42 (nucleophile) is an active-site residue.

Belongs to the pseudouridine synthase TruB family. Type 1 subfamily.

It carries out the reaction uridine(55) in tRNA = pseudouridine(55) in tRNA. Responsible for synthesis of pseudouridine from uracil-55 in the psi GC loop of transfer RNAs. The chain is tRNA pseudouridine synthase B from Lactococcus lactis subsp. cremoris (strain MG1363).